Reading from the N-terminus, the 309-residue chain is Porphobilinogen deaminase (309 aa).

Residue Cys241 is modified to S-(dipyrrolylmethanemethyl)cysteine.

The protein belongs to the HMBS family. Monomer. Dipyrromethane serves as cofactor.

It carries out the reaction 4 porphobilinogen + H2O = hydroxymethylbilane + 4 NH4(+). The protein operates within porphyrin-containing compound metabolism; protoporphyrin-IX biosynthesis; coproporphyrinogen-III from 5-aminolevulinate: step 2/4. In terms of biological role, tetrapolymerization of the monopyrrole PBG into the hydroxymethylbilane pre-uroporphyrinogen in several discrete steps. The sequence is that of Porphobilinogen deaminase from Oceanobacillus iheyensis (strain DSM 14371 / CIP 107618 / JCM 11309 / KCTC 3954 / HTE831).